The primary structure comprises 487 residues: Glutamyl-tRNA(Gln) amidotransferase subunit A (487 aa).

Active-site charge relay system residues include Lys77 and Ser152. Residue Ser176 is the Acyl-ester intermediate of the active site.

It belongs to the amidase family. GatA subfamily. In terms of assembly, heterotrimer of A, B and C subunits.

The catalysed reaction is L-glutamyl-tRNA(Gln) + L-glutamine + ATP + H2O = L-glutaminyl-tRNA(Gln) + L-glutamate + ADP + phosphate + H(+). Functionally, allows the formation of correctly charged Gln-tRNA(Gln) through the transamidation of misacylated Glu-tRNA(Gln) in organisms which lack glutaminyl-tRNA synthetase. The reaction takes place in the presence of glutamine and ATP through an activated gamma-phospho-Glu-tRNA(Gln). The sequence is that of Glutamyl-tRNA(Gln) amidotransferase subunit A from Ligilactobacillus salivarius (strain UCC118) (Lactobacillus salivarius).